The primary structure comprises 560 residues: Oxygen-dependent choline dehydrogenase (560 aa).

8-37 (DYIIIGAGSAGNVLATRLTEDADVSVLLLE) serves as a coordination point for FAD. The active-site Proton acceptor is His-475.

This sequence belongs to the GMC oxidoreductase family. It depends on FAD as a cofactor.

It catalyses the reaction choline + A = betaine aldehyde + AH2. It carries out the reaction betaine aldehyde + NAD(+) + H2O = glycine betaine + NADH + 2 H(+). It functions in the pathway amine and polyamine biosynthesis; betaine biosynthesis via choline pathway; betaine aldehyde from choline (cytochrome c reductase route): step 1/1. Functionally, involved in the biosynthesis of the osmoprotectant glycine betaine. Catalyzes the oxidation of choline to betaine aldehyde and betaine aldehyde to glycine betaine at the same rate. This Stenotrophomonas maltophilia (strain K279a) protein is Oxygen-dependent choline dehydrogenase.